The primary structure comprises 155 residues: Ribosome maturation factor RimP (155 aa).

It belongs to the RimP family.

The protein resides in the cytoplasm. Required for maturation of 30S ribosomal subunits. This is Ribosome maturation factor RimP from Parasynechococcus marenigrum (strain WH8102).